Here is a 415-residue protein sequence, read N- to C-terminus: Queuine tRNA-ribosyltransferase accessory subunit 2 (415 aa).

Cys351, Cys353, Cys356, and His382 together coordinate Zn(2+).

Belongs to the queuine tRNA-ribosyltransferase family. QTRT2 subfamily. As to quaternary structure, heterodimer of a catalytic subunit qtrt1 and an accessory subunit qtrt2. Zn(2+) serves as cofactor.

The protein resides in the cytoplasm. It localises to the mitochondrion outer membrane. In terms of biological role, non-catalytic subunit of the queuine tRNA-ribosyltransferase (TGT) that catalyzes the base-exchange of a guanine (G) residue with queuine (Q) at position 34 (anticodon wobble position) in tRNAs with GU(N) anticodons (tRNA-Asp, -Asn, -His and -Tyr), resulting in the hypermodified nucleoside queuosine (7-(((4,5-cis-dihydroxy-2-cyclopenten-1-yl)amino)methyl)-7-deazaguanosine). This chain is Queuine tRNA-ribosyltransferase accessory subunit 2, found in Xenopus laevis (African clawed frog).